Here is a 572-residue protein sequence, read N- to C-terminus: MALSSISIFIHCLVDPLPRKQTSKTLPSNHIDFKSAFNVANWSINQTLVSPLSAQCIHLTDEDVRIKERRTRAFKHILRKEGEGSHEVLAMIDAIQRLGIDHHFQDEIDEILQRQYTIPSYYNDNDLHGLALRFRLLRQGGYNVSAGVFDKFKDKEGNFDQKLSDDIRGLMELYEASQLSIGAEDHILDEAGDYSHQLLSSWMTRLDDSQARIIKNTLDHPHHKNLARFRATNFNRYFHMANIEGWMNELQELAKIDFQMVQSQNQQEIFQVAGWWKDLGISKELKFVRNQPLKWYIWSMATLSDPSLSQQRIDLTKPISFIYIIDDIFDVQGSLDELTLFTEIVKRWDVEAVEQLPGYMRACFKALDSVTNEIGYKVYKQHGWNPVHSLRETWASLCKAFLVEARWFASGHLPAAEEYLQNGIVSSGVHVVLVHIFYLLGHGVTREGVDFIGNRPAIITSTATILRLWDDLGISKDENQDGHDGSYVECYVKEHKGSLVEIATKKVTVMISDAWKQLNQECLHPNPFSPNFTKSCLNLARMVPLMYSYDDNHRLPVLEYYTKSLLFESVSI.

3 residues coordinate Mg(2+): Asp326, Asp330, and Glu478. Residues 326–330 (DDIFD) carry the DDXXD motif motif.

This sequence belongs to the terpene synthase family. Mg(2+) serves as cofactor.

Functionally, probable sesquiterpene synthase. The protein is Probable terpene synthase 13 (TPS13) of Ricinus communis (Castor bean).